Here is a 243-residue protein sequence, read N- to C-terminus: Transcription factor TFIIS homolog (243 aa).

One can recognise a TFIIS central domain in the interval 77–201 (MRDIIQMMFF…SQQKVAEKTS (125 aa)). The segment at 202–242 (QLYKCPNCKQRMCTYREVQTRALDEPSTIYCTCKKCGHEFI) adopts a TFIIS-type zinc-finger fold. The Zn(2+) site is built by Cys-206, Cys-209, Cys-234, and Cys-237.

It belongs to the TFS-II family.

Its function is as follows. Putative initiation factor. Necessary for efficient transcription elongation past template-encoded arresting sites. In African swine fever virus (isolate Pig/Kenya/KEN-50/1950) (ASFV), this protein is Transcription factor TFIIS homolog.